We begin with the raw amino-acid sequence, 1349 residues long: Aldehyde oxidase 2 (1349 aa).

The 2Fe-2S ferredoxin-type domain maps to 8-96 (DELVFFVNGR…GAAVTTVEGV (89 aa)). [2Fe-2S] cluster-binding residues include C47, C52, C55, and C78. Position 117 (Q117) interacts with Mo-molybdopterin. [2Fe-2S] cluster is bound by residues C118, C121, C153, and C155. C155 is a binding site for Mo-molybdopterin. The region spanning 240–425 (FYGERVTWIS…ESVHIPHSQK (186 aa)) is the FAD-binding PCMH-type domain. Residues 268–275 (LVVGNTSL), A349, S358, H362, D371, and L415 each bind FAD. Mo-molybdopterin is bound by residues 816–817 (GF), 1098–1101 (ASVG), Q1213, and L1278. E1280 (proton acceptor; for azaheterocycle hydroxylase activity) is an active-site residue.

Belongs to the xanthine dehydrogenase family. In terms of assembly, homodimer. [2Fe-2S] cluster is required as a cofactor. Requires FAD as cofactor. Mo-molybdopterin serves as cofactor. In terms of tissue distribution, only detected at very few levels in nasal mucosa.

It localises to the cytoplasm. The enzyme catalyses an aldehyde + O2 + H2O = a carboxylate + H2O2 + H(+). In terms of biological role, oxidase with broad substrate specificity, oxidizing aromatic azaheterocycles, such as phthalazine, as well as aldehydes, such as benzaldehyde and retinal. In Macaca fascicularis (Crab-eating macaque), this protein is Aldehyde oxidase 2 (AOX2).